Reading from the N-terminus, the 432-residue chain is Adenylosuccinate synthetase (432 aa).

GTP-binding positions include 12-18 (GDEGKGK) and 40-42 (GHT). Aspartate 13 functions as the Proton acceptor in the catalytic mechanism. Mg(2+) is bound by residues aspartate 13 and glycine 40. Residues 13 to 16 (DEGK), 38 to 41 (NAGH), threonine 133, arginine 147, glutamine 228, threonine 243, and arginine 307 contribute to the IMP site. The Proton donor role is filled by histidine 41. 303-309 (TTTGRPR) contributes to the substrate binding site. Residues arginine 309, 335–337 (KLD), and 417–419 (GVG) each bind GTP.

Belongs to the adenylosuccinate synthetase family. As to quaternary structure, homodimer. It depends on Mg(2+) as a cofactor.

The protein localises to the cytoplasm. It catalyses the reaction IMP + L-aspartate + GTP = N(6)-(1,2-dicarboxyethyl)-AMP + GDP + phosphate + 2 H(+). It functions in the pathway purine metabolism; AMP biosynthesis via de novo pathway; AMP from IMP: step 1/2. In terms of biological role, plays an important role in the de novo pathway of purine nucleotide biosynthesis. Catalyzes the first committed step in the biosynthesis of AMP from IMP. The sequence is that of Adenylosuccinate synthetase from Nocardioides sp. (strain ATCC BAA-499 / JS614).